The chain runs to 86 residues: NADH-ubiquinone oxidoreductase chain 4L (86 aa).

2 helical membrane passes run 22–42 and 52–72; these read LLVT…LLVY and FIFL…LVSL.

This sequence belongs to the complex I subunit 4L family.

It localises to the mitochondrion membrane. It catalyses the reaction a ubiquinone + NADH + 5 H(+)(in) = a ubiquinol + NAD(+) + 4 H(+)(out). Core subunit of the mitochondrial membrane respiratory chain NADH dehydrogenase (Complex I) that is believed to belong to the minimal assembly required for catalysis. Complex I functions in the transfer of electrons from NADH to the respiratory chain. The immediate electron acceptor for the enzyme is believed to be ubiquinone. This chain is NADH-ubiquinone oxidoreductase chain 4L (ND4L), found in Artemia salina (Brine shrimp).